The sequence spans 100 residues: NADH-quinone oxidoreductase subunit K (100 aa).

3 helical membrane-spanning segments follow: residues 4 to 24 (TTWVIILSFLLFAIGTFGLLS), 28 to 48 (LLFILLSLEIMLNGIILLFIA), and 60 to 80 (IMYLLVLTLAASEVAVGLALV).

It belongs to the complex I subunit 4L family. NDH-1 is composed of 13 different subunits. Subunits NuoA, H, J, K, L, M, N constitute the membrane sector of the complex.

It localises to the cell inner membrane. It catalyses the reaction a quinone + NADH + 5 H(+)(in) = a quinol + NAD(+) + 4 H(+)(out). Functionally, NDH-1 shuttles electrons from NADH, via FMN and iron-sulfur (Fe-S) centers, to quinones in the respiratory chain. The immediate electron acceptor for the enzyme in this species is believed to be ubiquinone. Couples the redox reaction to proton translocation (for every two electrons transferred, four hydrogen ions are translocated across the cytoplasmic membrane), and thus conserves the redox energy in a proton gradient. The protein is NADH-quinone oxidoreductase subunit K of Shewanella woodyi (strain ATCC 51908 / MS32).